The following is a 198-amino-acid chain: Tumor necrosis factor receptor superfamily member 22 (198 aa).

Topologically, residues 1-20 are cytoplasmic; sequence MFGFFCSLVSSLSRWFLWRR. Residues 21-41 form a helical; Signal-anchor for type II membrane protein membrane-spanning segment; sequence LLLLLLLLLLNLPLQVKFAML. Over 42 to 198 the chain is Extracellular; sequence ELHSFKCPAG…SVVVFRIIRR (157 aa). TNFR-Cys repeat units lie at residues 47-82, 84-124, and 125-165; these read KCPA…QGQC, KCHP…DRKC, and QCRT…NTVC. Cystine bridges form between cysteine 48–cysteine 59, cysteine 60–cysteine 73, cysteine 63–cysteine 82, cysteine 85–cysteine 100, cysteine 103–cysteine 116, cysteine 106–cysteine 124, cysteine 126–cysteine 141, cysteine 144–cysteine 157, and cysteine 147–cysteine 165. Residue asparagine 62 is glycosylated (N-linked (GlcNAc...) asparagine). The N-linked (GlcNAc...) asparagine glycan is linked to asparagine 158.

In terms of tissue distribution, ubiquitous.

Its subcellular location is the cell membrane. It localises to the secreted. Its function is as follows. Receptor for the cytotoxic ligand TNFSF10/TRAIL. Lacks a cytoplasmic death domain and hence is not capable of inducing apoptosis. Protects cells against TRAIL mediated apoptosis possibly through ligand competition. Cannot induce the NF-kappa-B pathway. This Mus musculus (Mouse) protein is Tumor necrosis factor receptor superfamily member 22 (Tnfrsf22).